Consider the following 148-residue polypeptide: Deoxyuridine 5'-triphosphate nucleotidohydrolase (148 aa).

Substrate contacts are provided by residues 67 to 69 (RSG), asparagine 80, 84 to 86 (LID), and methionine 94.

The protein belongs to the dUTPase family. Mg(2+) is required as a cofactor.

The enzyme catalyses dUTP + H2O = dUMP + diphosphate + H(+). It functions in the pathway pyrimidine metabolism; dUMP biosynthesis; dUMP from dCTP (dUTP route): step 2/2. Functionally, this enzyme is involved in nucleotide metabolism: it produces dUMP, the immediate precursor of thymidine nucleotides and it decreases the intracellular concentration of dUTP so that uracil cannot be incorporated into DNA. This chain is Deoxyuridine 5'-triphosphate nucleotidohydrolase, found in Francisella tularensis subsp. tularensis (strain FSC 198).